The following is a 578-amino-acid chain: Vesicular acetylcholine transporter (578 aa).

Topologically, residues 1-32 are cytoplasmic; it reads MASFQIPVINLEVREVKDIVWEKIQEPVNQRR. The helical transmembrane segment at 33–53 threads the bilayer; the sequence is LILVIVSIALLLDNMLYMVIV. Residues 54–98 lie on the Lumenal, vesicle side of the membrane; that stretch reads PIIPDYLREIGSFDDGPTPPPLRDNITGKIIPVHHDHHGQDSATG. Residue asparagine 78 is glycosylated (N-linked (GlcNAc...) asparagine). Residues 99–119 traverse the membrane as a helical segment; that stretch reads ILFASKAIVQLMVNPFSGGLI. Over 120-125 the chain is Cytoplasmic; it reads DKIGYD. The chain crosses the membrane as a helical span at residues 126-146; the sequence is LPMMIGLTIMFFSTAVFACGS. At 147–154 the chain is on the lumenal, vesicle side; that stretch reads SYSVLFFA. A helical transmembrane segment spans residues 155–175; the sequence is RSLQGAGSAFADTAGLAMIAD. Topologically, residues 176 to 187 are cytoplasmic; the sequence is RFTEENERSQAL. The chain crosses the membrane as a helical span at residues 188–208; it reads GIALAFISFGCLVAPPFGGAL. Topologically, residues 209 to 215 are lumenal, vesicle; it reads YQFAGKE. Residues 216 to 236 traverse the membrane as a helical segment; the sequence is VPFLILALVCLLDGLMLLLVM. The Cytoplasmic portion of the chain corresponds to 237–263; the sequence is KPVKEAMKQSKDVQDQVIPIWRLLMDP. The chain crosses the membrane as a helical span at residues 264–284; that stretch reads YIAVCAGALTMSNVALAFLEP. The Lumenal, vesicle portion of the chain corresponds to 285–299; the sequence is TISLWMEDNMTTDNW. An N-linked (GlcNAc...) asparagine glycan is attached at asparagine 293. The helical transmembrane segment at 300 to 320 threads the bilayer; that stretch reads KIGMVWLPAFFPHVLGVVITV. Topologically, residues 321 to 330 are cytoplasmic; sequence KMARKYPQHQ. Residues 331–351 traverse the membrane as a helical segment; the sequence is WLMAAGGLALEGFSCFIIPFC. Topologically, residues 352–355 are lumenal, vesicle; that stretch reads SGYK. Residues 356–376 form a helical membrane-spanning segment; that stretch reads MLMLPICVICFGIALIDTALL. The Cytoplasmic segment spans residues 377 to 387; the sequence is PTLGYLVDVRY. Residues 388-408 traverse the membrane as a helical segment; it reads VSVYGSIYAIADISYSIAYAV. The Lumenal, vesicle portion of the chain corresponds to 409–413; sequence GPIIA. The chain crosses the membrane as a helical span at residues 414–434; the sequence is GGVVEAIGFTALNFLIAFSNL. At 435–578 the chain is on the cytoplasmic side; sequence AYVPVLRKLR…APANPFRQGF (144 aa). 2 stretches are compositionally biased toward low complexity: residues 507-534 and 549-563; these read EYQQ…EQGG and QQQQ…QQVQ. Positions 507 to 578 are disordered; it reads EYQQQQQGYQ…APANPFRQGF (72 aa).

Belongs to the major facilitator superfamily. Vesicular transporter family.

The protein localises to the membrane. In terms of biological role, involved in acetylcholine transport into synaptic vesicles. The protein is Vesicular acetylcholine transporter (VAChT) of Drosophila melanogaster (Fruit fly).